Here is a 304-residue protein sequence, read N- to C-terminus: Ornithine carbamoyltransferase (304 aa).

Carbamoyl phosphate contacts are provided by residues serine 53–threonine 56, glutamine 80, arginine 104, and histidine 131–glutamine 134. L-ornithine contacts are provided by residues asparagine 162, aspartate 219, and serine 223–methionine 224. Carbamoyl phosphate is bound by residues cysteine 259–leucine 260 and arginine 287.

The protein belongs to the aspartate/ornithine carbamoyltransferase superfamily. OTCase family.

The protein resides in the cytoplasm. It carries out the reaction carbamoyl phosphate + L-ornithine = L-citrulline + phosphate + H(+). Its pathway is amino-acid biosynthesis; L-arginine biosynthesis; L-arginine from L-ornithine and carbamoyl phosphate: step 1/3. Functionally, reversibly catalyzes the transfer of the carbamoyl group from carbamoyl phosphate (CP) to the N(epsilon) atom of ornithine (ORN) to produce L-citrulline. The polypeptide is Ornithine carbamoyltransferase (Nitrosococcus oceani (strain ATCC 19707 / BCRC 17464 / JCM 30415 / NCIMB 11848 / C-107)).